Here is a 119-residue protein sequence, read N- to C-terminus: Small ribosomal subunit protein uS13m (119 aa).

The protein belongs to the universal ribosomal protein uS13 family. As to quaternary structure, component of the mitochondrial small ribosomal subunit (mt-SSU). Mature N.crassa 74S mitochondrial ribosomes consist of a small (37S) and a large (54S) subunit. The 37S small subunit contains a 16S ribosomal RNA (16S mt-rRNA) and 32 different proteins. The 54S large subunit contains a 23S rRNA (23S mt-rRNA) and 42 different proteins.

Its subcellular location is the mitochondrion. Its function is as follows. Component of the mitochondrial ribosome (mitoribosome), a dedicated translation machinery responsible for the synthesis of mitochondrial genome-encoded proteins, including at least some of the essential transmembrane subunits of the mitochondrial respiratory chain. The mitoribosomes are attached to the mitochondrial inner membrane and translation products are cotranslationally integrated into the membrane. This Neurospora crassa (strain ATCC 24698 / 74-OR23-1A / CBS 708.71 / DSM 1257 / FGSC 987) protein is Small ribosomal subunit protein uS13m (sws2).